The sequence spans 652 residues: DNA ligase (652 aa).

NAD(+) contacts are provided by residues 29–33 (DSEYD), 78–79 (SL), and E107. The N6-AMP-lysine intermediate role is filled by K109. NAD(+)-binding residues include R130, E164, K278, and K302. C395, C398, C413, and C418 together coordinate Zn(2+). One can recognise a BRCT domain in the interval 577–652 (DQQAALFGLT…IEDEDWLLNL (76 aa)).

Belongs to the NAD-dependent DNA ligase family. LigA subfamily. Mg(2+) is required as a cofactor. Requires Mn(2+) as cofactor.

The catalysed reaction is NAD(+) + (deoxyribonucleotide)n-3'-hydroxyl + 5'-phospho-(deoxyribonucleotide)m = (deoxyribonucleotide)n+m + AMP + beta-nicotinamide D-nucleotide.. In terms of biological role, DNA ligase that catalyzes the formation of phosphodiester linkages between 5'-phosphoryl and 3'-hydroxyl groups in double-stranded DNA using NAD as a coenzyme and as the energy source for the reaction. It is essential for DNA replication and repair of damaged DNA. This chain is DNA ligase, found in Streptococcus equi subsp. equi (strain 4047).